A 347-amino-acid polypeptide reads, in one-letter code: GMP reductase (347 aa).

108–131 (DDFTKTRQILAMSSALRFICVDVA) contributes to the NADP(+) binding site. K(+)-binding residues include Gly181 and Gly183. Cys186 acts as the Thioimidate intermediate in catalysis. 216-239 (IVGDGGCTCPGDVAKAFGGGADFV) lines the NADP(+) pocket.

The protein belongs to the IMPDH/GMPR family. GuaC type 1 subfamily. Homotetramer.

It catalyses the reaction IMP + NH4(+) + NADP(+) = GMP + NADPH + 2 H(+). Functionally, catalyzes the irreversible NADPH-dependent deamination of GMP to IMP. It functions in the conversion of nucleobase, nucleoside and nucleotide derivatives of G to A nucleotides, and in maintaining the intracellular balance of A and G nucleotides. The protein is GMP reductase of Aeromonas hydrophila subsp. hydrophila (strain ATCC 7966 / DSM 30187 / BCRC 13018 / CCUG 14551 / JCM 1027 / KCTC 2358 / NCIMB 9240 / NCTC 8049).